The primary structure comprises 153 residues: Prostaglandin E synthase (153 aa).

The Lumenal segment spans residues 1–13 (MPSPGLVMESGQV). The chain crosses the membrane as a helical span at residues 14-42 (LPAFLLCSTLLVIKMYAVAVITGQMRLRK). Arg39 lines the glutathione pocket. Over 43–61 (KAFANPEDALKRGGLQYYR) the chain is Cytoplasmic. Residues 62–91 (SDPDVERCLRAHRNDMETIYPFLFLGFVYS) traverse the membrane as a helical segment. 74 to 78 (RNDME) is a glutathione binding site. Residues 92–96 (FLGPN) lie on the Lumenal side of the membrane. The chain crosses the membrane as a helical span at residues 97-120 (PLIAWIHFLVVLTGRVVHTVAYLG). Residues His114 and Tyr118 each contribute to the glutathione site. Over 121-124 (KLNP) the chain is Cytoplasmic. A helical membrane pass occupies residues 125 to 153 (RLRSGAYVLAQFSCFSMALQILWEVAHHL). Residue 127–131 (RSGAY) coordinates glutathione.

It belongs to the MAPEG family. Homotrimer. The cofactor is glutathione.

The protein localises to the membrane. Its subcellular location is the cytoplasm. It is found in the perinuclear region. The catalysed reaction is prostaglandin H2 = prostaglandin E2. The enzyme catalyses 2-glyceryl-prostaglandin H2 = 2-glyceryl-prostaglandin E2. It carries out the reaction prostaglandin G2 = (15S)-15-hydroperoxy-prostaglandin E2. It catalyses the reaction 1-chloro-2,4-dinitrobenzene + glutathione = 2,4-dinitrophenyl-S-glutathione + chloride + H(+). The catalysed reaction is (5S)-hydroperoxy-(6E,8Z,11Z,14Z)-eicosatetraenoate + 2 glutathione = (5S)-hydroxy-(6E,8Z,11Z,14Z)-eicosatetraenoate + glutathione disulfide + H2O. Its pathway is lipid metabolism; prostaglandin biosynthesis. With respect to regulation, activity is increased markedly in macrophages and osteoblasts following pro-inflammatory stimuli. Its function is as follows. Terminal enzyme of the cyclooxygenase (COX)-2-mediated prostaglandin E2 (PGE2) biosynthetic pathway. Catalyzes the glutathione-dependent oxidoreduction of prostaglandin endoperoxide H2 (PGH2) to prostaglandin E2 (PGE2) in response to inflammatory stimuli. Plays a key role in inflammation response, fever and pain. Also catalyzes the oxidoreduction of endocannabinoids into prostaglandin glycerol esters and PGG2 into 15-hydroperoxy-PGE2. In addition, displays low glutathione transferase and glutathione-dependent peroxidase activities, toward 1-chloro-2,4-dinitrobenzene and 5-hydroperoxyicosatetraenoic acid (5-HPETE), respectively. The chain is Prostaglandin E synthase (Ptges) from Mus musculus (Mouse).